The following is a 148-amino-acid chain: Protein TIFY 5B (148 aa).

Residues 54–89 (PKQESQILTIFYNGHMCVSSDLTHLEANAILSLASR) enclose the Tify domain.

It belongs to the TIFY/JAZ family. In terms of processing, ubiquitinated. Targeted for degradation by the SCF(COI1) E3 ubiquitin ligase-proteasome pathway during jasmonate signaling.

The protein resides in the nucleus. In terms of biological role, repressor of jasmonate responses. The sequence is that of Protein TIFY 5B (TIFY 5B) from Arabidopsis thaliana (Mouse-ear cress).